Consider the following 162-residue polypeptide: Xanthine phosphoribosyltransferase (162 aa).

Residues Leu5 and Thr12 each coordinate xanthine. 113–117 lines the 5-phospho-alpha-D-ribose 1-diphosphate pocket; sequence ANGQA. Lys141 contacts xanthine.

Belongs to the purine/pyrimidine phosphoribosyltransferase family. Xpt subfamily. Homodimer.

It localises to the cytoplasm. The catalysed reaction is XMP + diphosphate = xanthine + 5-phospho-alpha-D-ribose 1-diphosphate. It participates in purine metabolism; XMP biosynthesis via salvage pathway; XMP from xanthine: step 1/1. Converts the preformed base xanthine, a product of nucleic acid breakdown, to xanthosine 5'-monophosphate (XMP), so it can be reused for RNA or DNA synthesis. The protein is Xanthine phosphoribosyltransferase (xpt) of Streptococcus mitis.